We begin with the raw amino-acid sequence, 597 residues long: uncharacterized protein (597 aa).

Positions 1–23 (MSHEGSRQARDRGVTRSKAEKAR) are enriched in basic and acidic residues. 2 disordered regions span residues 1–32 (MSHE…VPQV) and 171–192 (RESQ…NPRP). The span at 175–186 (EPTQSSEPSAEP) shows a compositional bias: low complexity. Residues serine 237 and serine 241 each carry the phosphoserine modification. Disordered stretches follow at residues 302-335 (SLLS…MRLD) and 549-569 (EAEE…GVSK). Residues 557-568 (APEQQPIQTGVS) show a composition bias toward polar residues.

This is an uncharacterized protein from Rattus norvegicus (Rat).